The primary structure comprises 1446 residues: DNA polymerase III PolC-type (1446 aa).

An Exonuclease domain is found at 425 to 581; the sequence is YVIFDVETTG…ADAESTGYLL (157 aa).

Belongs to the DNA polymerase type-C family. PolC subfamily.

It localises to the cytoplasm. It carries out the reaction DNA(n) + a 2'-deoxyribonucleoside 5'-triphosphate = DNA(n+1) + diphosphate. Functionally, required for replicative DNA synthesis. This DNA polymerase also exhibits 3' to 5' exonuclease activity. The protein is DNA polymerase III PolC-type of Latilactobacillus sakei subsp. sakei (strain 23K) (Lactobacillus sakei subsp. sakei).